The following is a 121-amino-acid chain: Small ribosomal subunit protein bS16 (121 aa).

Residues 97 to 114 show a composition bias toward basic and acidic residues; it reads LAKAKTKDEENDNSKVES. A disordered region spans residues 97-121; it reads LAKAKTKDEENDNSKVESEGNEAES.

The protein belongs to the bacterial ribosomal protein bS16 family.

This is Small ribosomal subunit protein bS16 from Prochlorococcus marinus (strain AS9601).